Reading from the N-terminus, the 152-residue chain is Nucleoside diphosphate kinase B (152 aa).

Residues 1-66 (MANLERTFIA…DRPFFPGLVK (66 aa)) form an interaction with AKAP13 region. The ATP site is built by Lys-12, Phe-60, Arg-88, Thr-94, Arg-105, and Asn-115. The active-site Pros-phosphohistidine intermediate is His-118.

Belongs to the NDK family. Hexamer of two different chains: An and B (A6, A5B, A4B2, A3B3, A2B4, AB5, B6). Interacts with CAPN8. Interacts with AKAP13. Interacts with ITGB1BP1 (via C-terminal domain region). Interacts with BCL2L10. It depends on Mg(2+) as a cofactor.

It is found in the cytoplasm. The protein localises to the cell projection. It localises to the lamellipodium. The protein resides in the ruffle. Its subcellular location is the nucleus. It carries out the reaction a 2'-deoxyribonucleoside 5'-diphosphate + ATP = a 2'-deoxyribonucleoside 5'-triphosphate + ADP. The catalysed reaction is a ribonucleoside 5'-diphosphate + ATP = a ribonucleoside 5'-triphosphate + ADP. It catalyses the reaction ATP + protein L-histidine = ADP + protein N-phospho-L-histidine.. Major role in the synthesis of nucleoside triphosphates other than ATP. The ATP gamma phosphate is transferred to the NDP beta phosphate via a ping-pong mechanism, using a phosphorylated active-site intermediate. Negatively regulates Rho activity by interacting with AKAP13/LBC. Acts as a transcriptional activator of the MYC gene; binds DNA non-specifically. Binds to both single-stranded guanine- and cytosine-rich strands within the nuclease hypersensitive element (NHE) III(1) region of the MYC gene promoter. Does not bind to duplex NHE III(1). Has G-quadruplex (G4) DNA-binding activity, which is independent of its nucleotide-binding and kinase activity. Binds both folded and unfolded G4 with similar low nanomolar affinities. Stabilizes folded G4s regardless of whether they are prefolded or not. Exhibits histidine protein kinase activity. In Pongo abelii (Sumatran orangutan), this protein is Nucleoside diphosphate kinase B (NME2).